Reading from the N-terminus, the 465-residue chain is MSNCCRILWIAIVIGLGVLYYEITKEFPKPNIPLDTWWGTGKSQKIDTSMRPFKIAINDEVLNTLKVKLSDVSFTPPLEGIDFQYGFNTNTLKKLVDFWRTQYNWREREALLNKYPHFKTNIQGLDIHYVHIKPQVSKNIHVLPMIMVHGWPGSFVEFYKIIPMLTTPRTDYNFVFELILPSIPGYGFSQAAAKPGLGATQIAVIMHNLMDRIGFKKYYVQGGDWGSRIVSAMSTLFPENVLGHHSNLCFLNTLSSNIKSFVGSLFPEWFAGKQNVHKIYPLSEHFFTLLEESGYFHIQATKPDTVGVALRDSPAGLAAYILEKFSTGTNKAWRSAKDGNLQSKFTFTELLDNVMIYYVTGSITTSMRIYAESYSWDHLSLNMDRVPTIVPTACAKFPHEIAYKTDFQLAEKYKTLLQSTIMPRGGHFAALEEPLLLAEDIFSAVKKFIDHHSKKDSKNQENRDL.

A helical membrane pass occupies residues 7–27 (ILWIAIVIGLGVLYYEITKEF). Residue aspartate 224 is the Nucleophile of the active site. Catalysis depends on tyrosine 370, which acts as the Proton donor. Residue histidine 427 is the Proton acceptor of the active site.

The protein belongs to the peptidase S33 family.

The protein localises to the microsome membrane. It is found in the endoplasmic reticulum membrane. It carries out the reaction cis-stilbene oxide + H2O = (1R,2R)-hydrobenzoin. It catalyses the reaction 1-(4-methoxyphenyl)-N-methyl-N-[(3-methyloxetan-3-yl)methyl]methanamine + H2O = 2-{[(4-methoxybenzyl)(methyl)amino]methyl}-2-methylpropane-1,3-diol. In terms of biological role, catalyzes juvenile hormone hydrolysis. In Ctenocephalides felis (Cat flea), this protein is Juvenile hormone epoxide hydrolase 2.